The primary structure comprises 263 residues: MKKIHPSAVIEEGAQLGDDVVIEAYAYVGKDTKIGNDVVIKQGARILSDTTIGDHSRVFSYAIVGDIPQDISYKEEQKSGVVIGKNATIREFATINSGTAKGDGFTRIGDNAFIMAYCHIAHDCLLGNNIILANNATLAGHVELGDFTVVGGLTPIHQFVKVGEGCMIAGASALSQDIVPFCLAEGNRASIRSLNLVGIRRRFDKDEVDRLSRAFKTLFRQGDLKENAKNLLENQESENVKKMCHFILETKRGIPVYRGKNNA.

This sequence belongs to the transferase hexapeptide repeat family. LpxA subfamily. In terms of assembly, homotrimer.

It is found in the cytoplasm. The enzyme catalyses a (3R)-hydroxyacyl-[ACP] + UDP-N-acetyl-alpha-D-glucosamine = a UDP-3-O-[(3R)-3-hydroxyacyl]-N-acetyl-alpha-D-glucosamine + holo-[ACP]. It functions in the pathway glycolipid biosynthesis; lipid IV(A) biosynthesis; lipid IV(A) from (3R)-3-hydroxytetradecanoyl-[acyl-carrier-protein] and UDP-N-acetyl-alpha-D-glucosamine: step 1/6. Functionally, involved in the biosynthesis of lipid A, a phosphorylated glycolipid that anchors the lipopolysaccharide to the outer membrane of the cell. The polypeptide is Acyl-[acyl-carrier-protein]--UDP-N-acetylglucosamine O-acyltransferase (Campylobacter jejuni subsp. jejuni serotype O:6 (strain 81116 / NCTC 11828)).